Consider the following 186-residue polypeptide: MAGHRLVLVLGDLHIPHRCNSLPAKFKKLLVPGKIQHILCTGNLCTKDTYDYLKTLAGDVHVVRGDFDENLNYPEQKVVTVGQFKIGLIHGHQVIPWGDMASLALLQRQFDVDILISGHTHKFEAFEHENKFYINPGSATGAYHALENNIIPSFVLMDIQASTVVTYVYQLIGDDVKVERIEYKKS.

The protein belongs to the VPS29 family. In terms of assembly, component of the commander complex consisting of the CCC subcomplex and the retriever subcomplex. Component of the heterotrimeric retriever complex formed by VPS26C, VPS29 and VPS35L; within the complex interacts with VPS35L. Component of the heterotrimeric retromer cargo-selective complex (CSC), also described as vacuolar protein sorting subcomplex (VPS), formed by VPS26 (VPS26A or VPS26B), VPS29 and VPS35. The CSC has a highly elongated structure with VPS26 and VPS29 binding independently at opposite distal ends of VPS35 as central platform. The CSC is believed to associate with variable sorting nexins to form functionally distinct retromer complex variants. The originally described retromer complex (also called SNX-BAR retromer) is a pentamer containing the CSC and a heterodimeric membrane-deforming subcomplex formed between SNX1 or SNX2 and SNX5 or SNX6 (also called SNX-BAR subcomplex); the respective CSC and SNX-BAR subcomplexes associate with low affinity. The CSC associates with SNX3 to form a SNX3-retromer complex. The CSC associates with SNX27, the WASH complex and the SNX-BAR subcomplex to form the SNX27-retromer complex. Interacts with VPS26A, VPS35, SNX1, SNX2, SNX3, SNX27, WASHC5. Interacts with TBC1D5; this interaction is blocked by VPS35L in the retriever complex. Interacts with SNX17; the interaction is indirect; SNX17 (via its C-terminus) interacts with the retriever complex (via VPS26C and VPS35L). Interacts with VPS26B and ANKRD27.

The protein localises to the cytoplasm. Its subcellular location is the membrane. It is found in the endosome membrane. Functionally, component of the commander complex that is essential for endosomal recycling of transmembrane cargos; the commander complex is composed of the CCC subcomplex and the retriever subcomplex. Component of the retriever complex, which is a heterotrimeric complex related to retromer cargo-selective complex (CSC) and essential for retromer-independent retrieval and recycling of numerous cargos such as integrin alpha-5/beta-1 (ITGA5:ITGB1). Component of the retromer cargo-selective complex (CSC). The CSC is believed to be the core functional component of retromer or respective retromer complex variants acting to prevent missorting of selected transmembrane cargo proteins into the lysosomal degradation pathway. The recruitment of the CSC to the endosomal membrane involves RAB7A and SNX3. The SNX-BAR retromer mediates retrograde transport of cargo proteins from endosomes to the trans-Golgi network (TGN) and is involved in endosome-to-plasma membrane transport for cargo protein recycling. The SNX3-retromer mediates the retrograde endosome-to-TGN transport of WLS distinct from the SNX-BAR retromer pathway. The SNX27-retromer is believed to be involved in endosome-to-plasma membrane trafficking and recycling of a broad spectrum of cargo proteins. The CSC seems to act as recruitment hub for other proteins, such as the WASH complex and TBC1D5. Required to regulate transcytosis of the polymeric immunoglobulin receptor (pIgR-pIgA). In the endosomes, retriever complex drives the retrieval and recycling of NxxY-motif-containing cargo proteins by coupling to SNX17, a cargo essential for the homeostatic maintenance of numerous cell surface proteins associated with processes that include cell migration, cell adhesion, nutrient supply and cell signaling. The recruitment of the retriever complex to the endosomal membrane involves CCC and WASH complexes. Involved in GLUT1 endosome-to-plasma membrane trafficking; the function is dependent of association with ANKRD27. The polypeptide is Vacuolar protein sorting-associated protein 29 (VPS29) (Gallus gallus (Chicken)).